Reading from the N-terminus, the 354-residue chain is Probable mannitol dehydrogenase 1 (354 aa).

Cys43, His65, Cys96, Cys99, Cys102, Cys110, and Cys158 together coordinate Zn(2+).

It belongs to the zinc-containing alcohol dehydrogenase family. Zn(2+) serves as cofactor.

It carries out the reaction D-mannitol + NAD(+) = D-mannose + NADH + H(+). In terms of biological role, oxidizes mannitol to mannose. Provides the initial step by which translocated mannitol is committed to central metabolism and, by regulating mannitol pool size, is important in regulating salt tolerance at the cellular level. The chain is Probable mannitol dehydrogenase 1 (CAD1) from Stylosanthes humilis (Townsville stylo).